Consider the following 822-residue polypeptide: Integrator complex assembly factor BRAT1 (822 aa).

Positions 100 to 200 are required for interaction with NDFIP1; it reads LGLFGESGAP…WPMCAQKIVN (101 aa). HEAT repeat units follow at residues 495–531 and 544–576; these read LLFL…IRHW and SEVP…SSQG. Position 743 is a phosphoserine (S743). A BRAT1-like motif motif is present at residues 820–822; sequence DCY. C821 contacts Zn(2+).

The protein belongs to the BRAT1 family. Part of the multiprotein complex composed of BRAT1, WDR73, as well as integrator complex subunits INTS9 and INTS11. Interacts with BRCA1 and ATM. Interacts with MTOR and RPTOR. Interacts with NDFIP1. Interacts with SMC1A and PRKDC. In terms of processing, ubiquitinated by NEDD4, NEDD4L and ITCH; mono- and polyubiquitinated forms are detected. High levels detected in the cortex and much lower levels detected in the cerebellum, spinal cord and lung (at protein level).

The protein localises to the nucleus. It is found in the cytoplasm. In terms of biological role, component of a multiprotein complex required for the assembly of the RNA endonuclease module of the integrator complex. Associates with INTS9 and INTS11 in the cytoplasm and blocks the active site of INTS11 to inhibit the endonuclease activity of INTS11 before formation of the full integrator complex. Following dissociation of WDR73 of the complex, BRAT1 facilitates the nuclear import of the INTS9-INTS11 heterodimer. In the nucleus, INTS4 is integrated to the INTS9-INTS11 heterodimer and BRAT1 is released from the mature RNA endonuclease module by inositol hexakisphosphate (InsP6). BRAT1 is also involved in DNA damage response; activates kinases ATM, SMC1A and PRKDC by modulating their phosphorylation status following ionizing radiation (IR) stress. Plays a role in regulating mitochondrial function and cell proliferation. Required for protein stability of MTOR and MTOR-related proteins, and cell cycle progress by growth factors. The sequence is that of Integrator complex assembly factor BRAT1 from Mus musculus (Mouse).